We begin with the raw amino-acid sequence, 86 residues long: Small nuclear ribonucleoprotein F (86 aa).

The Sm domain maps to N14–N86.

The protein belongs to the snRNP Sm proteins family. SmF/LSm6 subfamily. As to quaternary structure, component of the Sm core complex, present in spliceosomal snRNP U1, U2, U4/U6 and U5. The core complex contains SMB1, SMD1, SMD2, SMD3, SME1, SMX3 and SMX2 (Sm proteins B, D1, D2, D3, E, F and G, respectively), and is probably a heptameric ring structure. SMX3 specifically interacts with SME1. Belongs to the CWC complex (or CEF1-associated complex), a spliceosome sub-complex reminiscent of a late-stage spliceosome composed of the U2, U5 and U6 snRNAs and at least BUD13, BUD31, BRR2, CDC40, CEF1, CLF1, CUS1, CWC2, CWC15, CWC21, CWC22, CWC23, CWC24, CWC25, CWC27, ECM2, HSH155, IST3, ISY1, LEA1, MSL1, NTC20, PRP8, PRP9, PRP11, PRP19, PRP21, PRP22, PRP45, PRP46, SLU7, SMB1, SMD1, SMD2, SMD3, SMX2, SMX3, SNT309, SNU114, SPP2, SYF1, SYF2, RSE1 and YJU2. Component of the U4/U6-U5 tri-snRNP complex composed of the U4, U6 and U5 snRNAs and at least PRP3, PRP4, PRP6, PRP8, PRP18, PRP31, PRP38, SNU13, SNU23, SNU66, SNU114, SPP381, SMB1, SMD1, SMD2, SMD3, SMX2, SMX3, LSM2, LSM3, LSM4, LSM5, LSM6, LSM7, LSM8, BRR2 and DIB1.

The protein localises to the nucleus. The protein resides in the cytoplasm. In terms of biological role, plays a role in pre-mRNA splicing as a core component of the spliceosomal U1, U2, U4 and U5 small nuclear ribonucleoproteins (snRNPs), the building blocks of the spliceosome. The sequence is that of Small nuclear ribonucleoprotein F (SMX3) from Saccharomyces cerevisiae (strain ATCC 204508 / S288c) (Baker's yeast).